Here is a 224-residue protein sequence, read N- to C-terminus: Peroxiredoxin-like 2A (224 aa).

Residues 14–112 (MWSVGLGAVG…SKLGVPLYAV (99 aa)) are thioredoxin fold. Residue Sec85 is a non-standard amino acid, selenocysteine. Cys88 serves as the catalytic Redox-active.

This sequence belongs to the peroxiredoxin-like PRXL2 family. PRXL2A subfamily.

Its subcellular location is the cytoplasm. Functionally, involved in redox regulation of the cell. Acts as an antioxidant. Inhibits TNFSF11-induced NFKB1 and JUN activation and osteoclast differentiation. May affect bone resorption and help to maintain bone mass. The chain is Peroxiredoxin-like 2A (PRXL2A) from Gallus gallus (Chicken).